Here is a 214-residue protein sequence, read N- to C-terminus: Pyridoxine/pyridoxamine 5'-phosphate oxidase (214 aa).

Substrate-binding positions include 8–11 (RKSY) and lysine 67. FMN-binding positions include 62–67 (RVVLLK), 77–78 (YT), lysine 84, and glutamine 106. The substrate site is built by tyrosine 124, arginine 128, and serine 132. FMN-binding positions include 141–142 (QS) and tryptophan 186. 192–194 (RLH) is a binding site for substrate. An FMN-binding site is contributed by arginine 196.

The protein belongs to the pyridoxamine 5'-phosphate oxidase family. Homodimer. Requires FMN as cofactor.

It carries out the reaction pyridoxamine 5'-phosphate + O2 + H2O = pyridoxal 5'-phosphate + H2O2 + NH4(+). The catalysed reaction is pyridoxine 5'-phosphate + O2 = pyridoxal 5'-phosphate + H2O2. The protein operates within cofactor metabolism; pyridoxal 5'-phosphate salvage; pyridoxal 5'-phosphate from pyridoxamine 5'-phosphate: step 1/1. It functions in the pathway cofactor metabolism; pyridoxal 5'-phosphate salvage; pyridoxal 5'-phosphate from pyridoxine 5'-phosphate: step 1/1. Its function is as follows. Catalyzes the oxidation of either pyridoxine 5'-phosphate (PNP) or pyridoxamine 5'-phosphate (PMP) into pyridoxal 5'-phosphate (PLP). This Flavobacterium johnsoniae (strain ATCC 17061 / DSM 2064 / JCM 8514 / BCRC 14874 / CCUG 350202 / NBRC 14942 / NCIMB 11054 / UW101) (Cytophaga johnsonae) protein is Pyridoxine/pyridoxamine 5'-phosphate oxidase.